Consider the following 415-residue polypeptide: Serine--tRNA ligase (415 aa).

231 to 233 is an L-serine binding site; that stretch reads TAE. ATP is bound at residue 262 to 264; the sequence is RSE. Glu285 is a binding site for L-serine. 349–352 is an ATP binding site; that stretch reads EISS. Ser383 is a binding site for L-serine.

Belongs to the class-II aminoacyl-tRNA synthetase family. Type-1 seryl-tRNA synthetase subfamily. Homodimer. The tRNA molecule binds across the dimer.

It is found in the cytoplasm. The enzyme catalyses tRNA(Ser) + L-serine + ATP = L-seryl-tRNA(Ser) + AMP + diphosphate + H(+). The catalysed reaction is tRNA(Sec) + L-serine + ATP = L-seryl-tRNA(Sec) + AMP + diphosphate + H(+). Its pathway is aminoacyl-tRNA biosynthesis; selenocysteinyl-tRNA(Sec) biosynthesis; L-seryl-tRNA(Sec) from L-serine and tRNA(Sec): step 1/1. In terms of biological role, catalyzes the attachment of serine to tRNA(Ser). Is also able to aminoacylate tRNA(Sec) with serine, to form the misacylated tRNA L-seryl-tRNA(Sec), which will be further converted into selenocysteinyl-tRNA(Sec). The polypeptide is Serine--tRNA ligase (Helicobacter pylori (strain Shi470)).